The sequence spans 337 residues: Dihydroorotate dehydrogenase (quinone) (337 aa).

FMN is bound by residues 61-65 (AGLDK) and Thr85. Residue Lys65 participates in substrate binding. 110–114 (NRMGF) serves as a coordination point for substrate. Positions 138 and 171 each coordinate FMN. Asn171 is a substrate binding site. Catalysis depends on Ser174, which acts as the Nucleophile. Asn176 serves as a coordination point for substrate. Lys216 and Thr244 together coordinate FMN. A substrate-binding site is contributed by 245–246 (NT). Residues Gly267, Gly296, and 317–318 (YS) contribute to the FMN site.

This sequence belongs to the dihydroorotate dehydrogenase family. Type 2 subfamily. In terms of assembly, monomer. FMN serves as cofactor.

It localises to the cell membrane. The enzyme catalyses (S)-dihydroorotate + a quinone = orotate + a quinol. The protein operates within pyrimidine metabolism; UMP biosynthesis via de novo pathway; orotate from (S)-dihydroorotate (quinone route): step 1/1. In terms of biological role, catalyzes the conversion of dihydroorotate to orotate with quinone as electron acceptor. This chain is Dihydroorotate dehydrogenase (quinone), found in Thiobacillus denitrificans (strain ATCC 25259 / T1).